The sequence spans 891 residues: Aconitate hydratase A (891 aa).

Positions 435, 501, and 504 each coordinate [4Fe-4S] cluster.

It belongs to the aconitase/IPM isomerase family. As to quaternary structure, monomer. [4Fe-4S] cluster serves as cofactor.

It carries out the reaction citrate = D-threo-isocitrate. The catalysed reaction is (2S,3R)-3-hydroxybutane-1,2,3-tricarboxylate = 2-methyl-cis-aconitate + H2O. The protein operates within carbohydrate metabolism; tricarboxylic acid cycle; isocitrate from oxaloacetate: step 2/2. It functions in the pathway organic acid metabolism; propanoate degradation. Its function is as follows. Involved in the catabolism of short chain fatty acids (SCFA) via the tricarboxylic acid (TCA)(acetyl degradation route) and the 2-methylcitrate cycle I (propionate degradation route). Catalyzes the reversible isomerization of citrate to isocitrate via cis-aconitate. Also catalyzes the hydration of 2-methyl-cis-aconitate to yield (2R,3S)-2-methylisocitrate. The (2S,3S)-2-methylcitrate (2-MC) is a very poor substrate. The apo form of AcnA functions as a RNA-binding regulatory protein. The protein is Aconitate hydratase A (acnA) of Salmonella typhimurium (strain LT2 / SGSC1412 / ATCC 700720).